We begin with the raw amino-acid sequence, 143 residues long: Large ribosomal subunit protein uL13 (143 aa).

It belongs to the universal ribosomal protein uL13 family. As to quaternary structure, part of the 50S ribosomal subunit.

Functionally, this protein is one of the early assembly proteins of the 50S ribosomal subunit, although it is not seen to bind rRNA by itself. It is important during the early stages of 50S assembly. The protein is Large ribosomal subunit protein uL13 of Caldanaerobacter subterraneus subsp. tengcongensis (strain DSM 15242 / JCM 11007 / NBRC 100824 / MB4) (Thermoanaerobacter tengcongensis).